Consider the following 511-residue polypeptide: Maturase K (511 aa).

It belongs to the intron maturase 2 family. MatK subfamily.

It localises to the plastid. Its subcellular location is the chloroplast. In terms of biological role, usually encoded in the trnK tRNA gene intron. Probably assists in splicing its own and other chloroplast group II introns. This is Maturase K from Hordeum bulbosum (Bulbous barley).